Reading from the N-terminus, the 425-residue chain is Serine--tRNA ligase (425 aa).

Residue 228–230 coordinates L-serine; the sequence is TAE. An ATP-binding site is contributed by 259 to 261; sequence RSE. E282 provides a ligand contact to L-serine. 346–349 provides a ligand contact to ATP; that stretch reads EIAS. Position 382 (S382) interacts with L-serine.

It belongs to the class-II aminoacyl-tRNA synthetase family. Type-1 seryl-tRNA synthetase subfamily. Homodimer. The tRNA molecule binds across the dimer.

The protein localises to the cytoplasm. It catalyses the reaction tRNA(Ser) + L-serine + ATP = L-seryl-tRNA(Ser) + AMP + diphosphate + H(+). The enzyme catalyses tRNA(Sec) + L-serine + ATP = L-seryl-tRNA(Sec) + AMP + diphosphate + H(+). It functions in the pathway aminoacyl-tRNA biosynthesis; selenocysteinyl-tRNA(Sec) biosynthesis; L-seryl-tRNA(Sec) from L-serine and tRNA(Sec): step 1/1. Functionally, catalyzes the attachment of serine to tRNA(Ser). Is also able to aminoacylate tRNA(Sec) with serine, to form the misacylated tRNA L-seryl-tRNA(Sec), which will be further converted into selenocysteinyl-tRNA(Sec). This chain is Serine--tRNA ligase, found in Rickettsia peacockii (strain Rustic).